We begin with the raw amino-acid sequence, 134 residues long: UPF0412 protein YaaI (134 aa).

The first 23 residues, 1 to 23, serve as a signal peptide directing secretion; it reads MKSVITISASLAISLMLCCTAQA.

This sequence belongs to the UPF0412 family.

In Escherichia coli (strain UTI89 / UPEC), this protein is UPF0412 protein YaaI.